The chain runs to 453 residues: UDP-N-acetylmuramoylalanine--D-glutamate ligase (453 aa).

117 to 123 contacts ATP; it reads GANGKST.

It belongs to the MurCDEF family.

It is found in the cytoplasm. It carries out the reaction UDP-N-acetyl-alpha-D-muramoyl-L-alanine + D-glutamate + ATP = UDP-N-acetyl-alpha-D-muramoyl-L-alanyl-D-glutamate + ADP + phosphate + H(+). It participates in cell wall biogenesis; peptidoglycan biosynthesis. Its function is as follows. Cell wall formation. Catalyzes the addition of glutamate to the nucleotide precursor UDP-N-acetylmuramoyl-L-alanine (UMA). In Methylobacillus flagellatus (strain ATCC 51484 / DSM 6875 / VKM B-1610 / KT), this protein is UDP-N-acetylmuramoylalanine--D-glutamate ligase.